The primary structure comprises 293 residues: Lipoyl synthase (293 aa).

C38, C43, C49, C64, C68, C71, and S277 together coordinate [4Fe-4S] cluster. The 217-residue stretch at 50–266 folds into the Radical SAM core domain; that stretch reads WSRGTATFLL…STIAKNAGIR (217 aa).

It belongs to the radical SAM superfamily. Lipoyl synthase family. It depends on [4Fe-4S] cluster as a cofactor.

Its subcellular location is the cytoplasm. It catalyses the reaction [[Fe-S] cluster scaffold protein carrying a second [4Fe-4S](2+) cluster] + N(6)-octanoyl-L-lysyl-[protein] + 2 oxidized [2Fe-2S]-[ferredoxin] + 2 S-adenosyl-L-methionine + 4 H(+) = [[Fe-S] cluster scaffold protein] + N(6)-[(R)-dihydrolipoyl]-L-lysyl-[protein] + 4 Fe(3+) + 2 hydrogen sulfide + 2 5'-deoxyadenosine + 2 L-methionine + 2 reduced [2Fe-2S]-[ferredoxin]. The protein operates within protein modification; protein lipoylation via endogenous pathway; protein N(6)-(lipoyl)lysine from octanoyl-[acyl-carrier-protein]: step 2/2. Its function is as follows. Catalyzes the radical-mediated insertion of two sulfur atoms into the C-6 and C-8 positions of the octanoyl moiety bound to the lipoyl domains of lipoate-dependent enzymes, thereby converting the octanoylated domains into lipoylated derivatives. The protein is Lipoyl synthase of Chlorobium chlorochromatii (strain CaD3).